A 510-amino-acid chain; its full sequence is Beta-glucosidase 12 (510 aa).

The first 24 residues, 1 to 24, serve as a signal peptide directing secretion; that stretch reads MAAAGAMPGGLLLTFLLLAVVASG. Residue Q53 coordinates a beta-D-glucoside. N122 is a glycosylation site (N-linked (GlcNAc...) asparagine). A beta-D-glucoside is bound by residues H157 and 202-203; that span reads NE. Catalysis depends on E203, which acts as the Proton donor. 2 disulfides stabilise this stretch: C208-C243 and C222-C230. N-linked (GlcNAc...) asparagine glycosylation is present at N229. An a beta-D-glucoside-binding site is contributed by Y346. 2 N-linked (GlcNAc...) asparagine glycosylation sites follow: N361 and N371. An a beta-D-glucoside-binding site is contributed by E417. Residue E417 is the Nucleophile of the active site. N-linked (GlcNAc...) asparagine glycosylation occurs at N425. Residues W466, 473–474, and F482 contribute to the a beta-D-glucoside site; that span reads EW.

It belongs to the glycosyl hydrolase 1 family.

It localises to the secreted. It catalyses the reaction Hydrolysis of terminal, non-reducing beta-D-glucosyl residues with release of beta-D-glucose.. In terms of biological role, hydrolyzes p-nitrophenyl beta-D-glucoside, p-nitrophenyl beta-D-galactoside, p-nitrophenyl beta-D-xyloside, p-nitrophenyl beta-D-fucoside, p-nitrophenyl beta-L-arabinoside, cello-oligosaccharides and laminaribiose. The polypeptide is Beta-glucosidase 12 (Oryza sativa subsp. indica (Rice)).